Consider the following 287-residue polypeptide: Orotidine 5'-phosphate decarboxylase (287 aa).

K97 serves as the catalytic Proton donor.

Belongs to the OMP decarboxylase family. Type 2 subfamily.

It catalyses the reaction orotidine 5'-phosphate + H(+) = UMP + CO2. It participates in pyrimidine metabolism; UMP biosynthesis via de novo pathway; UMP from orotate: step 2/2. In Clostridium perfringens (strain SM101 / Type A), this protein is Orotidine 5'-phosphate decarboxylase.